Consider the following 675-residue polypeptide: Vacuolar protein sorting-associated protein 5 (675 aa).

3 disordered regions span residues 1–26 (MDYEDNLEAPVWDELNHEGDKTQSLV), 65–84 (EWKDPGLSVAGNPQLEEHDN), and 165–219 (RAQR…RREN). Positions 168–180 (RNSKRNHSLKAKR) are enriched in basic residues. A compositionally biased stretch (basic and acidic residues) spans 195–204 (PLKKAEKENE). Residues 279-394 (VAFKVEVKDP…LFLTSDDFSS (116 aa)) form the PX domain. A 1,2-diacyl-sn-glycero-3-phospho-(1D-myo-inositol-3-phosphate)-binding residues include Arg320, Lys346, and Arg360.

It belongs to the sorting nexin family. In terms of assembly, component of the retromer complex which consists of VPS29, VPS26, VPS35, VPS5 and VPS17. Component of a retromer subcomplex consisting of VPSD5 and VPS17. Phosphorylated on serine residue(s).

The protein localises to the cytoplasm. The protein resides in the golgi apparatus membrane. It is found in the endosome membrane. In terms of biological role, plays a role in vesicular protein sorting. Required for retention of late Golgi membrane proteins and vacuolar biogenesis. Component of the membrane-associated retromer complex which is essential in endosome-to-Golgi retrograde transport. The VPS5-VPS17 subcomplex may assemble onto the membrane to promote vesicle formation. The chain is Vacuolar protein sorting-associated protein 5 (VPS5) from Saccharomyces cerevisiae (strain ATCC 204508 / S288c) (Baker's yeast).